Consider the following 493-residue polypeptide: Xylulose kinase (493 aa).

84–85 (QH) is a binding site for substrate. The Proton acceptor role is filled by D247.

The protein belongs to the FGGY kinase family.

The enzyme catalyses D-xylulose + ATP = D-xylulose 5-phosphate + ADP + H(+). Catalyzes the phosphorylation of D-xylulose to D-xylulose 5-phosphate. The polypeptide is Xylulose kinase (Haemophilus influenzae (strain ATCC 51907 / DSM 11121 / KW20 / Rd)).